Consider the following 118-residue polypeptide: Non-specific lipid-transfer protein 2 (118 aa).

A signal peptide spans 1–25 (MARGMKLACVVLVICMVVIAPMAEG). Intrachain disulfides connect cysteine 29–cysteine 76, cysteine 39–cysteine 53, cysteine 54–cysteine 99, and cysteine 74–cysteine 113.

It belongs to the plant LTP family.

Functionally, plant non-specific lipid-transfer proteins transfer phospholipids as well as galactolipids across membranes. May play a role in wax or cutin deposition in the cell walls of expanding epidermal cells and certain secretory tissues. Binds saturated fatty acids, jasmonic acid and, with highest efficiency, unsaturated fatty acids and lysolipids. The chain is Non-specific lipid-transfer protein 2 from Lens culinaris (Lentil).